A 508-amino-acid polypeptide reads, in one-letter code: Photosystem II CP47 reaction center protein (508 aa).

6 helical membrane passes run 21–36 (SVHIMHTALVSGWAGS), 101–115 (IVFSGLCFLAAIWHW), 140–156 (GIHLFLSGLACFGFGAF), 203–218 (IAAGTLGILAGLFHLS), 237–252 (VLSSSIAAVFFAAFVV), and 457–472 (SFALLFFFGHIWHGAR).

It belongs to the PsbB/PsbC family. PsbB subfamily. In terms of assembly, PSII is composed of 1 copy each of membrane proteins PsbA, PsbB, PsbC, PsbD, PsbE, PsbF, PsbH, PsbI, PsbJ, PsbK, PsbL, PsbM, PsbT, PsbX, PsbY, PsbZ, Psb30/Ycf12, at least 3 peripheral proteins of the oxygen-evolving complex and a large number of cofactors. It forms dimeric complexes. Requires Binds multiple chlorophylls. PSII binds additional chlorophylls, carotenoids and specific lipids. as cofactor.

The protein resides in the plastid. It is found in the chloroplast thylakoid membrane. In terms of biological role, one of the components of the core complex of photosystem II (PSII). It binds chlorophyll and helps catalyze the primary light-induced photochemical processes of PSII. PSII is a light-driven water:plastoquinone oxidoreductase, using light energy to abstract electrons from H(2)O, generating O(2) and a proton gradient subsequently used for ATP formation. The sequence is that of Photosystem II CP47 reaction center protein from Dioscorea elephantipes (Elephant's foot yam).